The primary structure comprises 272 residues: MEEVVAERSNLGGVRHILLVLSGKGGVGKSTISTELALSLRHSGKKVGILDVDLCGPSIPRMFKVQDNDVHQCDAGWVPVFVDQEKSISLMSIGFLLEKPDDAVVWRGPKKNALIKQFVADVAWGELDFLIVDTPPGTSDEHISTVEALRPYKPLGAILVTTPQAVSVGDVRRELTFCKKTGLRVLGIVENMSGFVCPHCSECTNIFSKGGGEELAKHAGVPFLGSVPLDPQLSQSLEEGRDFIQEFPKSSAFPALTRIAQQILDGALQRSS.

Gly23–Ser30 lines the ATP pocket. Residues Cys197 and Cys200 each contribute to the [4Fe-4S] cluster site.

It belongs to the Mrp/NBP35 ATP-binding proteins family. NUBP2/CFD1 subfamily. As to quaternary structure, heterotetramer of 2 NUBP1 and 2 NUBP2 chains. Requires [4Fe-4S] cluster as cofactor.

It is found in the cytoplasm. In terms of biological role, component of the cytosolic iron-sulfur (Fe/S) protein assembly (CIA) machinery. Required for maturation of extramitochondrial Fe-S proteins. The NUBP1-NUBP2 heterotetramer forms a Fe-S scaffold complex, mediating the de novo assembly of an Fe-S cluster and its transfer to target apoproteins. This chain is Cytosolic Fe-S cluster assembly factor NUBP2, found in Gallus gallus (Chicken).